Here is a 301-residue protein sequence, read N- to C-terminus: Formylmethanofuran--tetrahydromethanopterin formyltransferase-like protein (301 aa).

Belongs to the FTR family.

This Archaeoglobus fulgidus (strain ATCC 49558 / DSM 4304 / JCM 9628 / NBRC 100126 / VC-16) protein is Formylmethanofuran--tetrahydromethanopterin formyltransferase-like protein.